The chain runs to 376 residues: Carbamoyl phosphate synthase small chain (376 aa).

Residues 1 to 181 (MSKAVLVLED…VEPDGPPGVS (181 aa)) are nucleophile. A CPSase region spans residues 1–183 (MSKAVLVLED…PDGPPGVSRF (183 aa)). L-glutamine contacts are provided by Ser46, Gly232, Gly234, Phe261, Gln264, Asn302, Gly304, and Phe305. One can recognise a Glutamine amidotransferase type-1 domain in the interval 184–376 (TVAALDLGIK…FVELMAGEGR (193 aa)). Catalysis depends on residues His350 and Glu352.

It belongs to the CarA family. As to quaternary structure, composed of two chains; the small (or glutamine) chain promotes the hydrolysis of glutamine to ammonia, which is used by the large (or ammonia) chain to synthesize carbamoyl phosphate. Tetramer of heterodimers (alpha,beta)4.

It catalyses the reaction hydrogencarbonate + L-glutamine + 2 ATP + H2O = carbamoyl phosphate + L-glutamate + 2 ADP + phosphate + 2 H(+). The enzyme catalyses L-glutamine + H2O = L-glutamate + NH4(+). It participates in amino-acid biosynthesis; L-arginine biosynthesis; carbamoyl phosphate from bicarbonate: step 1/1. It functions in the pathway pyrimidine metabolism; UMP biosynthesis via de novo pathway; (S)-dihydroorotate from bicarbonate: step 1/3. Its function is as follows. Small subunit of the glutamine-dependent carbamoyl phosphate synthetase (CPSase). CPSase catalyzes the formation of carbamoyl phosphate from the ammonia moiety of glutamine, carbonate, and phosphate donated by ATP, constituting the first step of 2 biosynthetic pathways, one leading to arginine and/or urea and the other to pyrimidine nucleotides. The small subunit (glutamine amidotransferase) binds and cleaves glutamine to supply the large subunit with the substrate ammonia. In Mycobacterium tuberculosis (strain CDC 1551 / Oshkosh), this protein is Carbamoyl phosphate synthase small chain.